A 282-amino-acid polypeptide reads, in one-letter code: MSNKIINLGSIEIANDKPFVLFGGMNVLESRDLAMSIAETYAEVTQKLGIPYVFKASFDKANRSSVNSYRGPGMEEGLKIFEEIKKTFNLPLITDVHETYQCAPVAEVVDIIQLPAFLARQTDLVVAMAKTGAIINVKKPQFLAPHEMRHIITKFNEAGNDEIILCERGSCFGYNNLVVDMLGMDEMKQSGYPVIFDATHALQRPGGRADSAGGRRAQATELARSGMALGLAGLFIEAHPDPDNAKCDGPCALPLHQLENYLKQMKAIDDLVKSFDPIDTSK.

This sequence belongs to the KdsA family.

Its subcellular location is the cytoplasm. The enzyme catalyses D-arabinose 5-phosphate + phosphoenolpyruvate + H2O = 3-deoxy-alpha-D-manno-2-octulosonate-8-phosphate + phosphate. Its pathway is carbohydrate biosynthesis; 3-deoxy-D-manno-octulosonate biosynthesis; 3-deoxy-D-manno-octulosonate from D-ribulose 5-phosphate: step 2/3. It functions in the pathway bacterial outer membrane biogenesis; lipopolysaccharide biosynthesis. The protein is 2-dehydro-3-deoxyphosphooctonate aldolase of Shewanella sp. (strain ANA-3).